Here is a 328-residue protein sequence, read N- to C-terminus: Pancreas transcription factor 1 subunit alpha (328 aa).

In terms of domain architecture, bHLH spans 163-215; the sequence is QLRQAANVRERRRMQSINDAFEGLRSHIPTLPYEKRLSKVDTLRLAIGYINFL. Disordered regions lie at residues 259 to 278 and 305 to 328; these read RGTR…PLAG and DPRK…EFVS.

Component of the pancreas transcription factor 1 complex (PTF1) which is composed of TCF3/p75, TCF12/p64 and PTF1A/p48. TCF3 is responsible for the nuclear import of the p48/p64 complex. Interacts with TCF3 and RBPSUH/RBP-Jkappa. In terms of tissue distribution, pancreas-specific (at protein level). Loss of expression is seen in ductal type pancreas cancers.

It is found in the nucleus. The protein localises to the cytoplasm. Functionally, transcription factor implicated in the cell fate determination in various organs. Binds to the E-box consensus sequence 5'-CANNTG-3'. Plays a role in early and late pancreas development and differentiation. Important for determining whether cells allocated to the pancreatic buds continue towards pancreatic organogenesis or revert back to duodenal fates. May be involved in the maintenance of exocrine pancreas-specific gene expression including ELA1 and amylase. Required for the formation of pancreatic acinar and ductal cells. Plays an important role in cerebellar development. Directly regulated by FOXN4 and RORC during retinal development, FOXN4-PTF1A pathway plays a central role in directing the differentiation of retinal progenitors towards horizontal and amacrine fates. The chain is Pancreas transcription factor 1 subunit alpha (PTF1A) from Homo sapiens (Human).